The chain runs to 279 residues: Ribosomal RNA small subunit methyltransferase J (279 aa).

Residues 138-139 (ER) and D194 contribute to the S-adenosyl-L-methionine site.

Belongs to the methyltransferase superfamily. RsmJ family.

It is found in the cytoplasm. It catalyses the reaction guanosine(1516) in 16S rRNA + S-adenosyl-L-methionine = N(2)-methylguanosine(1516) in 16S rRNA + S-adenosyl-L-homocysteine + H(+). Specifically methylates the guanosine in position 1516 of 16S rRNA. The protein is Ribosomal RNA small subunit methyltransferase J of Acinetobacter baumannii (strain ACICU).